Consider the following 410-residue polypeptide: MLRDTLKKAEKAREKKALYGEDIDLEKFIKEEAGEHEEVTRAKEVPKEVQETLLRVGVDPEERERAGTFIQVDQSGICTTCASESIEIMGMNVALDKYSWLKDYMWKAVAVDTDKYTATTALREAEGEMGGYFIRSKPGAREVFPLQACMFIGDERVMQTAHNIVIAEENSELHIITGCATGEDVSSALHVGVSEFYLKKGARITFTMVHNWAEQVEVRPRTGIMVGDDATYINNYILTSPVKSIQSYPTAYCTGENSRVVFQSILGGQKDSVLDMGSRVILEGRGSSAEMVSRAVSKDSSQIYSRGHLAGRVPEVKGHLECHGLVLSDDSMIYAVPELEGSATELEMSHEAAVGKIAEEEVMYLTSRGLTEEEAASMIVRGFLSMDITGLPPELAAETKRMLDMSLKGM.

It belongs to the iron-sulfur cluster assembly SufBD family.

This Methanothermobacter thermautotrophicus (strain ATCC 29096 / DSM 1053 / JCM 10044 / NBRC 100330 / Delta H) (Methanobacterium thermoautotrophicum) protein is Iron-sulfur cluster assembly SufBD family protein MTH_1150.